We begin with the raw amino-acid sequence, 251 residues long: 5'-nucleotidase SurE (251 aa).

The a divalent metal cation site is built by Asp-8, Asp-9, Ser-42, and Asn-94.

This sequence belongs to the SurE nucleotidase family. It depends on a divalent metal cation as a cofactor.

The protein localises to the cytoplasm. It carries out the reaction a ribonucleoside 5'-phosphate + H2O = a ribonucleoside + phosphate. Its function is as follows. Nucleotidase that shows phosphatase activity on nucleoside 5'-monophosphates. This Hydrogenovibrio crunogenus (strain DSM 25203 / XCL-2) (Thiomicrospira crunogena) protein is 5'-nucleotidase SurE.